Here is a 142-residue protein sequence, read N- to C-terminus: Ribosomal RNA large subunit methyltransferase H (142 aa).

Gly89 is a binding site for S-adenosyl-L-methionine.

Belongs to the RNA methyltransferase RlmH family. As to quaternary structure, homodimer.

The protein resides in the cytoplasm. It carries out the reaction pseudouridine(1915) in 23S rRNA + S-adenosyl-L-methionine = N(3)-methylpseudouridine(1915) in 23S rRNA + S-adenosyl-L-homocysteine + H(+). Specifically methylates the pseudouridine at position 1915 (m3Psi1915) in 23S rRNA. The sequence is that of Ribosomal RNA large subunit methyltransferase H from Zymomonas mobilis subsp. mobilis (strain ATCC 31821 / ZM4 / CP4).